We begin with the raw amino-acid sequence, 521 residues long: MTNIHTDKILILDFGAQYTQLIARRIREIGVYCEIWAWDHDPSEIAGFGAKGIILSGGPESTTLPGAPVAPQEVFDSGLPVFGICYGMQTLAAQLGGATEAADQREFGHAEVDVVAADALFAGLTDHAGASRLNVWMSHGDHVSQVPPGFTITATTDRIPVAAMSNEAKRWYGVQFHPEVTHTLQGQTLLRRFVVDVCGCQTLWTAANIIEDQIARVREQVGDDEVILGLSGGVDSSVVAALLHKAIGDKLTCVFVDTGLLRWQEGDQVMAMFAEHMGVKVIRVNAADRYFAKLEGVRDPEAKRKIIGNLFVEIFDEESNKLANAKWLAQGTIYPDVIESAGSKTGKAHVIKSHHNVGGLPEHMKLGLVEPLRELFKDEVRRLGVELGLPRTMVYRHPFPGPGLGVRILGEVKREYAELLAKADAIFIDELRKADLYDTTSQAFAVFLPVKSVGVVGDARAYEWVIALRAVETIDFMTAHWAHLPYDFLGTVSNRIINELRGVSRVVYDISGKPPATIEWE.

The 196-residue stretch at 8-203 (KILILDFGAQ…VVDVCGCQTL (196 aa)) folds into the Glutamine amidotransferase type-1 domain. Catalysis depends on C85, which acts as the Nucleophile. Residues H177 and E179 contribute to the active site. The GMPS ATP-PPase domain occupies 204-396 (WTAANIIEDQ…LGLPRTMVYR (193 aa)). An ATP-binding site is contributed by 231–237 (SGGVDSS).

In terms of assembly, homodimer.

It catalyses the reaction XMP + L-glutamine + ATP + H2O = GMP + L-glutamate + AMP + diphosphate + 2 H(+). The protein operates within purine metabolism; GMP biosynthesis; GMP from XMP (L-Gln route): step 1/1. In terms of biological role, catalyzes the synthesis of GMP from XMP. The chain is GMP synthase [glutamine-hydrolyzing] from Xanthomonas axonopodis pv. citri (strain 306).